The primary structure comprises 1046 residues: UDP-N-acetylglucosamine--peptide N-acetylglucosaminyltransferase 110 kDa subunit (1046 aa).

At Ala2 the chain carries N-acetylalanine. Phosphoserine; by GSK3-beta; alternate is present on residues Ser3 and Ser4. Residues Ser3 and Ser4 are each glycosylated (O-linked (GlcNAc) serine; alternate). Asp10 carries an O-linked (GlcNAc) serine glycan. The O-linked (GlcNAc) threonine glycan is linked to Thr12. Residue Met18 is glycosylated (O-linked (GlcNAc) serine). Ser20 is subject to Phosphoserine. The stretch at 21–54 (FQGLAELAHREYQAGDFEAAERHCMQLWRQEPDN) is one TPR 1 repeat. Residue Glu38 is glycosylated (O-linked (GlcNAc) threonine). 2 O-linked (GlcNAc) serine glycosylation sites follow: Pro52 and Gly56. 11 TPR repeats span residues 89 to 122 (AEAYSNLGNVYKERGQLQEAIEHYRHALRLKPDF), 123 to 156 (IDGYINLAAALVAAGDMEGAVQAYVSALQYNPDL), 157 to 190 (YCVRSDLGNLLKALGRLEEAKACYLKAIETQPNF), 191 to 224 (AVAWSNLGCVFNAQGEIWLAIHHFEKAVTLDPNF), 225 to 258 (LDAYINLGNVLKEARIFDRAVAAYLRALSLSPNH), 259 to 292 (AVVHGNLACVYYEQGLIDLAIDTYRRAIELQPHF), 293 to 326 (PDAYCNLANALKEKGSVAEAEDCYNTALRLCPTH), 327 to 360 (ADSLNNLANIKREQGNIEEAVRLYRKALEVFPEF), 361 to 394 (AAAHSNLASVLQQQGKLQEALMHYKEAIRISPTF), 395 to 428 (ADAYSNMGNTLKEMQDVQGALQCYTRAIQINPAF), and 429 to 462 (ADAHSNLASIHKDSGNIPEAIASYRTALKLKPDF). Ser399 is a glycosylation site (O-linked (GlcNAc) serine; by autocatalysis). Residue Thr454 is modified to Phosphothreonine; by AMPK. A TPR 13; truncated repeat occupies 463–473 (PDAYCNLAHCL). Positions 464–466 (DAY) match the DFP motif motif. A Nuclear localization signal motif is present at residues 487-503 (KKLVSIVADQLEKNRLP). His508 (proton acceptor) is an active-site residue. Residues Gln849, Lys852, 906 to 908 (APK), 911 to 914 (HVRR), 930 to 932 (HTT), and Asp935 each bind UDP. Position 989 is a phosphotyrosine (Tyr989). Positions 991–1010 (KKVRGKVWKQRISSPLFNTK) are required for phosphatidylinositol 3,4,5-triphosphate binding.

This sequence belongs to the glycosyltransferase 41 family. O-GlcNAc transferase subfamily. In terms of assembly, monomer; may exist in different oligomerization states in cells. Homotrimer, oligomerizes via TPR repeats 6 and 7. Trimerization is not necessary for activity in vitro, however it increases affinity for UDP-GlcNAc. Component of a THAP1/THAP3-HCFC1-OGT complex. Component of the NSL complex at least composed of MOF/KAT8, KANSL1, KANSL2, KANSL3, MCRS1, PHF20, OGT1/OGT, WDR5 and HCFC1. Found in a complex with KIF5B, RHOT1, RHOT2 and TRAK1. Found in a complex composed of at least SINHCAF, SIN3A, HDAC1, SAP30, RBBP4, OGT and TET1. Component of a complex composed of KMT2E/MLL5 (isoform 3), OGT (isoform 1) and USP7; the complex stabilizes KMT2E/MLL5, preventing KMT2E/MLL5 ubiquitination and proteasomal-mediated degradation. Interacts (via TPRs 1-6) with SIN3A; the interaction mediates transcriptional repression in parallel with histone deacetylase. Interacts (via TPR 5-6) with TET1, TET2 and TET3. Interacts (via TPR repeats 6 and 7) with ATXN10. Interacts with NSD2. Interacts with PROSER1; this interaction mediates TET2 O-GlcNAcylation and stability by promoting the interaction between OGT and TET2. As to quaternary structure, interacts with USP7. (Microbial infection) Interacts with human T-cell leukemia virus 1/HTLV-1 protein Tax; this interaction increases Tax interacting partner CREB1 O-GlcNAcylation. In terms of processing, ubiquitinated by the SCF(FBXO31) complex, leading to its proteasomal degradation. Post-translationally, phosphorylation on Ser-3 or Ser-4 by GSK3-beta positively regulates its activity. Phosphorylation at Thr-454 by AMPK promotes nuclear localization. Glycosylated via autocatalysis; O-GlcNAcylation at Ser-399 promotes nuclear localization. In terms of processing, glycosylated via autocatalysis; does not affect the enzyme activity but regulates substrate selectivity. Highly expressed in pancreas and to a lesser extent in skeletal muscle, heart, brain and placenta. Present in trace amounts in lung and liver.

Its subcellular location is the nucleus. The protein resides in the cytoplasm. The protein localises to the mitochondrion. It is found in the membrane. It localises to the cell membrane. Its subcellular location is the mitochondrion membrane. The protein resides in the cell projection. The catalysed reaction is L-seryl-[protein] + UDP-N-acetyl-alpha-D-glucosamine = 3-O-(N-acetyl-beta-D-glucosaminyl)-L-seryl-[protein] + UDP + H(+). The enzyme catalyses L-threonyl-[protein] + UDP-N-acetyl-alpha-D-glucosamine = 3-O-(N-acetyl-beta-D-glucosaminyl)-L-threonyl-[protein] + UDP + H(+). Its pathway is protein modification; protein glycosylation. Subject to product inhibition by UDP. Functionally, catalyzes the transfer of a single N-acetylglucosamine from UDP-GlcNAc to a serine or threonine residue in cytoplasmic and nuclear proteins resulting in their modification with a beta-linked N-acetylglucosamine (O-GlcNAc). Glycosylates a large and diverse number of proteins including histone H2B, AKT1, AMPK, ATG4B, CAPRIN1, EZH2, FNIP1, GSDMD, KRT7, LMNA, LMNB1, LMNB2, RPTOR, HOXA1, PFKL, KMT2E/MLL5, MAPT/TAU, TET2, RBL2, RET, NOD2 and HCFC1. Can regulate their cellular processes via cross-talk between glycosylation and phosphorylation or by affecting proteolytic processing. Involved in insulin resistance in muscle and adipocyte cells via glycosylating insulin signaling components and inhibiting the 'Thr-308' phosphorylation of AKT1, enhancing IRS1 phosphorylation and attenuating insulin signaling. Involved in glycolysis regulation by mediating glycosylation of 6-phosphofructokinase PFKL, inhibiting its activity. Plays a key role in chromatin structure by mediating O-GlcNAcylation of 'Ser-112' of histone H2B: recruited to CpG-rich transcription start sites of active genes via its interaction with TET proteins (TET1, TET2 or TET3). As part of the NSL complex indirectly involved in acetylation of nucleosomal histone H4 on several lysine residues. O-GlcNAcylation of 'Ser-75' of EZH2 increases its stability, and facilitating the formation of H3K27me3 by the PRC2/EED-EZH2 complex. Stabilizes KMT2E/MLL5 by mediating its glycosylation, thereby preventing KMT2E/MLL5 ubiquitination. Regulates circadian oscillation of the clock genes and glucose homeostasis in the liver. Stabilizes clock proteins BMAL1 and CLOCK through O-glycosylation, which prevents their ubiquitination and subsequent degradation. Promotes the CLOCK-BMAL1-mediated transcription of genes in the negative loop of the circadian clock such as PER1/2 and CRY1/2. O-glycosylates HCFC1 and regulates its proteolytic processing and transcriptional activity. Component of a THAP1/THAP3-HCFC1-OGT complex that is required for the regulation of the transcriptional activity of RRM1. Regulates mitochondrial motility in neurons by mediating glycosylation of TRAK1. Promotes autophagy by mediating O-glycosylation of ATG4B. Acts as a regulator of mTORC1 signaling by mediating O-glycosylation of RPTOR and FNIP1: O-GlcNAcylation of RPTOR in response to glucose sufficiency promotes activation of the mTORC1 complex. In terms of biological role, the mitochondrial isoform (mOGT) is cytotoxic and triggers apoptosis in several cell types including INS1, an insulinoma cell line. Has N-acetylglucosaminyltransferase activity: glycosylates proteins, such as HNRNPU, NEUROD1, NUP62 and PDCD6IP. Displays specific substrate selectivity compared to other isoforms. The sequence is that of UDP-N-acetylglucosamine--peptide N-acetylglucosaminyltransferase 110 kDa subunit from Homo sapiens (Human).